The sequence spans 121 residues: Small ribosomal subunit protein uS13 (121 aa).

The tract at residues His91–Lys121 is disordered. The segment covering Ala106–Lys121 has biased composition (basic residues).

The protein belongs to the universal ribosomal protein uS13 family. In terms of assembly, part of the 30S ribosomal subunit. Forms a loose heterodimer with protein S19. Forms two bridges to the 50S subunit in the 70S ribosome.

In terms of biological role, located at the top of the head of the 30S subunit, it contacts several helices of the 16S rRNA. In the 70S ribosome it contacts the 23S rRNA (bridge B1a) and protein L5 of the 50S subunit (bridge B1b), connecting the 2 subunits; these bridges are implicated in subunit movement. Contacts the tRNAs in the A and P-sites. This is Small ribosomal subunit protein uS13 from Bacillus mycoides (strain KBAB4) (Bacillus weihenstephanensis).